Here is a 299-residue protein sequence, read N- to C-terminus: Pyridoxal 5'-phosphate synthase subunit PdxS (299 aa).

A D-ribose 5-phosphate-binding site is contributed by Asp-29. Lys-86 serves as the catalytic Schiff-base intermediate with D-ribose 5-phosphate. Residue Gly-158 participates in D-ribose 5-phosphate binding. Arg-170 provides a ligand contact to D-glyceraldehyde 3-phosphate. D-ribose 5-phosphate-binding positions include Gly-219 and 240–241; that span reads GS.

It belongs to the PdxS/SNZ family. As to quaternary structure, in the presence of PdxT, forms a dodecamer of heterodimers.

It catalyses the reaction aldehydo-D-ribose 5-phosphate + D-glyceraldehyde 3-phosphate + L-glutamine = pyridoxal 5'-phosphate + L-glutamate + phosphate + 3 H2O + H(+). It participates in cofactor biosynthesis; pyridoxal 5'-phosphate biosynthesis. Catalyzes the formation of pyridoxal 5'-phosphate from ribose 5-phosphate (RBP), glyceraldehyde 3-phosphate (G3P) and ammonia. The ammonia is provided by the PdxT subunit. Can also use ribulose 5-phosphate and dihydroxyacetone phosphate as substrates, resulting from enzyme-catalyzed isomerization of RBP and G3P, respectively. This is Pyridoxal 5'-phosphate synthase subunit PdxS from Protochlamydia amoebophila (strain UWE25).